The following is a 137-amino-acid chain: MYCTHLKTLQLVVMATLWVTPVRAGTDCRYGCRLNNMTITVEREDCHGSITITTCAGLCETTDLNYQSTWLPRSQGVCNFKEWSYEKVYLEGCPSGVEPFFIPVAKSCDCIKCKTDNTDCDRKSMATPSCIVNPLEM.

A signal peptide spans 1-24 (MYCTHLKTLQLVVMATLWVTPVRA). Intrachain disulfides connect cysteine 32/cysteine 78, cysteine 46/cysteine 93, cysteine 55/cysteine 108, cysteine 59/cysteine 110, and cysteine 113/cysteine 120. Residue asparagine 36 is glycosylated (N-linked (GlcNAc...) asparagine).

It belongs to the glycoprotein hormones subunit beta family. As to quaternary structure, heterodimer of an alpha and a beta chain.

Its subcellular location is the secreted. Functionally, involved in gametogenesis and steroidogenesis. This Oncorhynchus masou (Cherry salmon) protein is Gonadotropin subunit beta-1 (cgba).